The following is a 135-amino-acid chain: Small ribosomal subunit protein eS6 (135 aa).

Belongs to the eukaryotic ribosomal protein eS6 family.

This is Small ribosomal subunit protein eS6 from Methanococcoides burtonii (strain DSM 6242 / NBRC 107633 / OCM 468 / ACE-M).